The sequence spans 138 residues: Small ribosomal subunit protein uS11c (138 aa).

Residues 1–22 (MAKSIPKTGSRKNVRIGSRNQT) form a disordered region.

The protein belongs to the universal ribosomal protein uS11 family. Part of the 30S ribosomal subunit.

The protein localises to the plastid. Its subcellular location is the chloroplast. This chain is Small ribosomal subunit protein uS11c, found in Phaseolus angularis (Azuki bean).